The following is a 359-amino-acid chain: Protein mab-21-like 2-B (359 aa).

The protein belongs to the mab-21 family.

It is found in the nucleus. The protein resides in the cytoplasm. Its function is as follows. Required for several aspects of embryonic development including normal development of the eye. The sequence is that of Protein mab-21-like 2-B (mab21l2-b) from Xenopus laevis (African clawed frog).